The chain runs to 315 residues: Prephenate dehydratase (315 aa).

A Prephenate dehydratase domain is found at 7–190 (VVAYLGPAGT…ARTRFVAVQA (184 aa)). Positions 204–283 (SVIFSLPNVP…LVFVGSWPSN (80 aa)) constitute an ACT domain.

The catalysed reaction is prephenate + H(+) = 3-phenylpyruvate + CO2 + H2O. It functions in the pathway amino-acid biosynthesis; L-phenylalanine biosynthesis; phenylpyruvate from prephenate: step 1/1. This is Prephenate dehydratase (pheA) from Corynebacterium glutamicum (strain ATCC 13032 / DSM 20300 / JCM 1318 / BCRC 11384 / CCUG 27702 / LMG 3730 / NBRC 12168 / NCIMB 10025 / NRRL B-2784 / 534).